The sequence spans 86 residues: Teretoxin Tsu6.16 (86 aa).

A signal peptide spans 1–21; that stretch reads MATSGRLLCVCLVMGLVFESL. The propeptide occupies 22–46; it reads GYLTGREKRPAENLEASVQRRWYLN.

This sequence belongs to the teretoxin M (TM) superfamily. Post-translationally, contains 3 disulfide bonds. Expressed by the venom duct.

Its subcellular location is the secreted. The protein is Teretoxin Tsu6.16 of Terebra subulata (Chocolate spotted auger).